The sequence spans 363 residues: Protein-arginine kinase (363 aa).

In terms of domain architecture, Phosphagen kinase C-terminal spans 24-254 (IVLSSRIRLA…AQLIEQERSA (231 aa)). Residues 27 to 31 (SSRIR), H92, R125, 176 to 180 (RASVM), and 207 to 212 (RGIYGE) each bind ATP. The short motif at 337–342 (RDARRA) is the RDXXRA motif of the pArg binding pocket involved in allosteric regulation element.

The protein belongs to the ATP:guanido phosphotransferase family.

It catalyses the reaction L-arginyl-[protein] + ATP = N(omega)-phospho-L-arginyl-[protein] + ADP + H(+). Its activity is regulated as follows. Appears to be allosterically activated by the binding of pArg-containing polypeptides to the pArg-binding pocket localized in the C-terminal domain of McsB. In terms of biological role, catalyzes the specific phosphorylation of arginine residues in a large number of proteins. Is part of the bacterial stress response system. Protein arginine phosphorylation has a physiologically important role and is involved in the regulation of many critical cellular processes, such as protein homeostasis, motility, competence, and stringent and stress responses, by regulating gene expression and protein activity. The protein is Protein-arginine kinase of Bacillus velezensis (strain DSM 23117 / BGSC 10A6 / LMG 26770 / FZB42) (Bacillus amyloliquefaciens subsp. plantarum).